The sequence spans 314 residues: Bifunctional pinoresinol-lariciresinol reductase 3 (314 aa).

Residues 11 to 17 (GGTGFIG), Arg-36, and Lys-45 contribute to the NADP(+) site. The Proton acceptor role is filled by Lys-138. Residue Arg-142 participates in NADP(+) binding. His-272 contacts substrate.

This sequence belongs to the NmrA-type oxidoreductase family. Isoflavone reductase subfamily. In terms of assembly, dimer.

It catalyses the reaction (-)-lariciresinol + NADP(+) = (-)-pinoresinol + NADPH + H(+). The catalysed reaction is (+)-secoisolariciresinol + NADP(+) = (-)-lariciresinol + NADPH + H(+). Its function is as follows. Reductase involved in lignan biosynthesis. Catalyzes the enantioselective sequential conversion of (-)-pinoresinol into (-)-lariciresinol and of (-)-lariciresinol into (+)-secoisolariciresinol. Abstracts the 4R-hydride from the NADPH cofactor during catalysis. The chain is Bifunctional pinoresinol-lariciresinol reductase 3 from Thuja plicata (Western red-cedar).